Consider the following 420-residue polypeptide: Odorant receptor 63a (420 aa).

At 1-43 (MYSPEEAAELKRRNYRSIREMIRLSYTVGFNLLDPSRCGQVLR) the chain is on the cytoplasmic side. Residues 44 to 64 (IWTIVLSVSSLASLYGHWQML) traverse the membrane as a helical segment. The Extracellular portion of the chain corresponds to 65–76 (ARYIHDIPRIGE). Residues 77 to 97 (TAGTALQFLTSIAKMWYFLFA) form a helical membrane-spanning segment. Residues 98–150 (HRQIYELLRKARCHELLQKCELFERMSDLPVIKEIRQQVESTMNRYWASTRRQ) are Cytoplasmic-facing. A helical membrane pass occupies residues 151–171 (ILIYLYSCICITTNYFINSFV). The Extracellular portion of the chain corresponds to 172–217 (INLYRYFTKPKGSYDIMLPLPSLYPAWEHKGLEFPYYHIQMYLETC). The helical transmembrane segment at 218 to 238 (SLYICGMCAVSFDGVFIVLCL) threads the bilayer. The Cytoplasmic portion of the chain corresponds to 239–296 (HSVGLMRSLNQMVEQATSELVPPDRRVEYLRCCIYQYQRVANFATEVNNCFRHITFTQ). A helical membrane pass occupies residues 297-317 (FLLSLFNWGLALFQMSVGLGN). N-linked (GlcNAc...) asparagine glycosylation occurs at Asn-318. Residues 318-320 (NSS) are Extracellular-facing. The helical transmembrane segment at 321 to 341 (ITMIRMTMYLVAAGYQIVVYC) threads the bilayer. Residues 342–387 (YNGQRFATASEEIANAFYQVRWYGESREFRHLIRMMLMRTNRGFRL) are Cytoplasmic-facing. A helical membrane pass occupies residues 388–408 (DVSWFMQMSLPTLMAMVRTSG). Topologically, residues 409–420 (QYFLLLQNVNQK) are extracellular.

The protein belongs to the insect chemoreceptor superfamily. Heteromeric odorant receptor channel (TC 1.A.69) family. Or63a subfamily. Interacts with Orco. Complexes exist early in the endomembrane system in olfactory sensory neurons (OSNs), coupling these complexes to the conserved ciliary trafficking pathway.

It is found in the cell membrane. In terms of biological role, odorant receptor which mediates acceptance or avoidance behavior, depending on its substrates. The odorant receptor repertoire encodes a large collection of odor stimuli that vary widely in identity, intensity, and duration. May form a complex with Orco to form odorant-sensing units, providing sensitive and prolonged odorant signaling and calcium permeability. Involved in the behavioral responses to butyl acetate, isoamyl acetate, and hexanoic acid. In Drosophila melanogaster (Fruit fly), this protein is Odorant receptor 63a (Or63a).